The chain runs to 323 residues: uncharacterized protein (323 aa).

Positions 1–142 (MPSVFFSYSH…QVAKAVREAA (142 aa)) constitute a TIR domain.

This is an uncharacterized protein from Sinorhizobium fredii (strain NBRC 101917 / NGR234).